Consider the following 197-residue polypeptide: C-type lectin domain family 3 member A (197 aa).

Residues 1 to 24 (MAKNGLVIYILVITLLLDQTSCHA) form the signal peptide. 3 cysteine pairs are disulfide-bonded: Cys-68–Cys-78, Cys-95–Cys-191, and Cys-167–Cys-183. The C-type lectin domain occupies 74 to 192 (FHKKCYLAAE…CHSSKRYICE (119 aa)).

It localises to the secreted. Promotes cell adhesion to laminin and fibronectin. The chain is C-type lectin domain family 3 member A (CLEC3A) from Bos taurus (Bovine).